We begin with the raw amino-acid sequence, 308 residues long: S-adenosylmethionine-dependent nucleotide dehydratase (308 aa).

A Radical SAM core domain is found at 7–253; it reads SIQELVINFH…WQSYLMINPE (247 aa). Cys-21, Cys-25, and Cys-28 together coordinate [4Fe-4S] cluster.

Belongs to the radical SAM superfamily. Viperin family. [4Fe-4S] cluster serves as cofactor.

The catalysed reaction is CTP + AH2 + S-adenosyl-L-methionine = 3'-deoxy-3',4'-didehydro-CTP + 5'-deoxyadenosine + L-methionine + A + H2O + H(+). It catalyses the reaction GTP + AH2 + S-adenosyl-L-methionine = 3'-deoxy-3',4'-didehydro-GTP + 5'-deoxyadenosine + L-methionine + A + H2O + H(+). It carries out the reaction UTP + AH2 + S-adenosyl-L-methionine = 3'-deoxy-3',4'-didehydro-UTP + 5'-deoxyadenosine + L-methionine + A + H2O + H(+). Its function is as follows. Expression of pVip58 in E.coli (strain MG1655) confers resistance to phages lambda, P1 and T7; delays culture collapse upon infection with T7. Catalyzes the conversion of cytidine triphosphate (CTP) to 3'-deoxy-3',4'-didehydro-CTP (ddhCTP), guanosine triphosphate (GTP) to 3'-deoxy-3',4'-didehydro-GTP (ddhGTP) and uridine triphosphate (UTP) to 3'-deoxy-3',4'-didehydro-UTP (ddhUTP), probably via a SAM-dependent radical mechanism. The modified nucleotide represses transcription from T7 RNA polymerase-directed genes (possibly by acting as chain terminators), strongly suggesting these nucleotides block viral polymerase transcription. In Pseudoalteromonas ulvae, this protein is S-adenosylmethionine-dependent nucleotide dehydratase.